The following is a 786-amino-acid chain: Protein SEY1 (786 aa).

Topologically, residues 1-684 (MSDLKEAIQL…KRSIVNTTER (684 aa)) are cytoplasmic. Residues 35–262 (GVKYHVISVF…QDASFFKDEY (228 aa)) enclose the GB1/RHD3-type G domain. Residue 45 to 52 (GSQSSGKS) participates in GTP binding. A coiled-coil region spans residues 355–375 (KKVYEERRDDLIKQLNTIIDE). Residues 685 to 705 (IPLYMYALVVALGWGRIITIL) form a helical membrane-spanning segment. Over 706-708 (RNP) the chain is Lumenal. The helical transmembrane segment at 709–729 (ATIILSIIVLAGAYFVHKLNL) threads the bilayer. Over 730–786 (WGPLLQFANQATGQATAVLKQTVRSLVVDEEPKRKILVEPHESEGVDKEPSKNDQHL) the chain is Cytoplasmic. The interval 765–786 (ILVEPHESEGVDKEPSKNDQHL) is disordered.

Belongs to the TRAFAC class dynamin-like GTPase superfamily. GB1/RHD3 GTPase family. RHD3 subfamily.

Its subcellular location is the endoplasmic reticulum membrane. Cooperates with the reticulon proteins and tubule-shaping DP1 family proteins to generate and maintain the structure of the tubular endoplasmic reticulum network. Has GTPase activity, which is required for its function in ER organization. The protein is Protein SEY1 of Kluyveromyces lactis (strain ATCC 8585 / CBS 2359 / DSM 70799 / NBRC 1267 / NRRL Y-1140 / WM37) (Yeast).